Here is a 235-residue protein sequence, read N- to C-terminus: Purine nucleoside phosphorylase DeoD-type (235 aa).

A purine D-ribonucleoside is bound at residue histidine 4. Residues glycine 20, arginine 24, arginine 43, and 87–90 (RVGT) each bind phosphate. A purine D-ribonucleoside contacts are provided by residues glutamate 162, 179 to 181 (EME), and 203 to 204 (SD). The Proton donor role is filled by aspartate 204.

The protein belongs to the PNP/UDP phosphorylase family. Homohexamer; trimer of homodimers.

It catalyses the reaction a purine D-ribonucleoside + phosphate = a purine nucleobase + alpha-D-ribose 1-phosphate. The enzyme catalyses a purine 2'-deoxy-D-ribonucleoside + phosphate = a purine nucleobase + 2-deoxy-alpha-D-ribose 1-phosphate. Its function is as follows. Catalyzes the reversible phosphorolytic breakdown of the N-glycosidic bond in the beta-(deoxy)ribonucleoside molecules, with the formation of the corresponding free purine bases and pentose-1-phosphate. The chain is Purine nucleoside phosphorylase DeoD-type from Bacillus anthracis (strain CDC 684 / NRRL 3495).